Here is a 338-residue protein sequence, read N- to C-terminus: Lipoate-protein ligase A (338 aa).

The 188-residue stretch at 29–216 (PATQRVLFLW…AFFAHYGERV (188 aa)) folds into the BPL/LPL catalytic domain. Residues R71, 76–79 (GAVF), and K134 contribute to the ATP site. K134 lines the (R)-lipoate pocket.

It belongs to the LplA family. As to quaternary structure, monomer.

The protein localises to the cytoplasm. The enzyme catalyses L-lysyl-[lipoyl-carrier protein] + (R)-lipoate + ATP = N(6)-[(R)-lipoyl]-L-lysyl-[lipoyl-carrier protein] + AMP + diphosphate + H(+). The protein operates within protein modification; protein lipoylation via exogenous pathway; protein N(6)-(lipoyl)lysine from lipoate: step 1/2. It participates in protein modification; protein lipoylation via exogenous pathway; protein N(6)-(lipoyl)lysine from lipoate: step 2/2. Catalyzes both the ATP-dependent activation of exogenously supplied lipoate to lipoyl-AMP and the transfer of the activated lipoyl onto the lipoyl domains of lipoate-dependent enzymes. The chain is Lipoate-protein ligase A from Salmonella choleraesuis (strain SC-B67).